The primary structure comprises 294 residues: 4-hydroxy-tetrahydrodipicolinate synthase (294 aa).

Thr-47 serves as a coordination point for pyruvate. The active-site Proton donor/acceptor is the Tyr-135. Residue Lys-163 is the Schiff-base intermediate with substrate of the active site. Ile-206 contacts pyruvate.

The protein belongs to the DapA family. In terms of assembly, homodimer.

The protein resides in the cytoplasm. It carries out the reaction L-aspartate 4-semialdehyde + pyruvate = (2S,4S)-4-hydroxy-2,3,4,5-tetrahydrodipicolinate + H2O + H(+). The protein operates within amino-acid biosynthesis; L-lysine biosynthesis via DAP pathway; (S)-tetrahydrodipicolinate from L-aspartate: step 3/4. Catalyzes the condensation of (S)-aspartate-beta-semialdehyde [(S)-ASA] and pyruvate to 4-hydroxy-tetrahydrodipicolinate (HTPA). In Staphylococcus carnosus (strain TM300), this protein is 4-hydroxy-tetrahydrodipicolinate synthase.